The sequence spans 232 residues: Phosphatidylserine decarboxylase proenzyme (232 aa).

Ser-190 (schiff-base intermediate with substrate; via pyruvic acid) is an active-site residue. A Pyruvic acid (Ser); by autocatalysis modification is found at Ser-190.

The protein belongs to the phosphatidylserine decarboxylase family. PSD-A subfamily. As to quaternary structure, heterodimer of a large membrane-associated beta subunit and a small pyruvoyl-containing alpha subunit. Pyruvate is required as a cofactor. Is synthesized initially as an inactive proenzyme. Formation of the active enzyme involves a self-maturation process in which the active site pyruvoyl group is generated from an internal serine residue via an autocatalytic post-translational modification. Two non-identical subunits are generated from the proenzyme in this reaction, and the pyruvate is formed at the N-terminus of the alpha chain, which is derived from the carboxyl end of the proenzyme. The post-translation cleavage follows an unusual pathway, termed non-hydrolytic serinolysis, in which the side chain hydroxyl group of the serine supplies its oxygen atom to form the C-terminus of the beta chain, while the remainder of the serine residue undergoes an oxidative deamination to produce ammonia and the pyruvoyl prosthetic group on the alpha chain.

Its subcellular location is the cell membrane. It carries out the reaction a 1,2-diacyl-sn-glycero-3-phospho-L-serine + H(+) = a 1,2-diacyl-sn-glycero-3-phosphoethanolamine + CO2. It functions in the pathway phospholipid metabolism; phosphatidylethanolamine biosynthesis; phosphatidylethanolamine from CDP-diacylglycerol: step 2/2. Its function is as follows. Catalyzes the formation of phosphatidylethanolamine (PtdEtn) from phosphatidylserine (PtdSer). The chain is Phosphatidylserine decarboxylase proenzyme from Sinorhizobium medicae (strain WSM419) (Ensifer medicae).